The sequence spans 407 residues: MRWFRALLKNASLAGAPKYIEHFSKFSPSPLSMKQFLDFGSSNACEKTSFTFLRQELPVRLANIMKEINLLPDRVLSTPSVQLVQSWYVQSLLDIMEFLDKDPEDHRTLSQFTDALVTIRNRHNDVVPTMAQGVLEYKDTYGDDPVSNQNIQYFLDRFYLSRISIRMLINQHTLIFDGSTNPAHPKHIGSIDPNCSVSDVVKDAYDMAKLLCDKYYMASPDLEIQEVNATNATQPIHMVYVPSHLYHMLFELFKNAMRATVESHESSLTLPPIKIMVALGEEDLSIKMSDRGGGVPLRKIERLFSYMYSTAPTPQPGTGGTPLAGFGYGLPISRLYAKYFQGDLQLFSMEGFGTDAVIYLKALSTDSVERLPVYNKSAWRHYQTIQEAGDWCVPSTEPKNTSTYRVS.

The region spanning 135–364 (LEYKDTYGDD…DAVIYLKALS (230 aa)) is the Histidine kinase domain. Residues Tyr-215 and Tyr-216 each carry the phosphotyrosine modification. ATP contacts are provided by residues 251 to 258 (ELFKNAMR), Asp-290, 309 to 310 (ST), and 325 to 330 (GFGYGL). N6-succinyllysine is present on Lys-376.

The protein belongs to the PDK/BCKDK protein kinase family. Homodimer, and heterodimer with PDK1. Interacts with the pyruvate dehydrogenase complex subunit DLAT, and is part of the multimeric pyruvate dehydrogenase complex that contains multiple copies of pyruvate dehydrogenase (E1), dihydrolipoamide acetyltransferase (DLAT, E2) and lipoamide dehydrogenase (DLD, E3). In terms of tissue distribution, detected in heart (at protein level). Highest level of expression in heart and skeletal muscle and the lowest in spleen and lung. Liver, kidney, brain and testis levels are intermediate.

The protein resides in the mitochondrion matrix. It carries out the reaction L-seryl-[pyruvate dehydrogenase E1 alpha subunit] + ATP = O-phospho-L-seryl-[pyruvate dehydrogenase E1 alpha subunit] + ADP + H(+). With respect to regulation, activity increases in response to increased acetyl-CoA and NADH levels and upon binding to the pyruvate dehydrogenase subunit DLAT. Inhibited by ADP and pyruvate; these compounds interfere with DLAT binding and thereby inhibit kinase activity. Inhibited by dichloroacetate. Inhibited by AZD7545; this compound interferes with DLAT binding and thereby inhibits kinase activity. Reactive oxygen species cause the formation of disulfide bonds, and thereby inhibit the enzyme. Kinase that plays a key role in the regulation of glucose and fatty acid metabolism and homeostasis via phosphorylation of the pyruvate dehydrogenase subunits PDHA1 and PDHA2. This inhibits pyruvate dehydrogenase activity, and thereby regulates metabolite flux through the tricarboxylic acid cycle, down-regulates aerobic respiration and inhibits the formation of acetyl-coenzyme A from pyruvate. Inhibition of pyruvate dehydrogenase decreases glucose utilization and increases fat metabolism. Mediates cellular responses to insulin. Plays an important role in maintaining normal blood glucose levels and in metabolic adaptation to nutrient availability. Via its regulation of pyruvate dehydrogenase activity, plays an important role in maintaining normal blood pH and in preventing the accumulation of ketone bodies under starvation. Plays a role in the regulation of cell proliferation and in resistance to apoptosis under oxidative stress. Plays a role in p53/TP53-mediated apoptosis. The chain is [Pyruvate dehydrogenase (acetyl-transferring)] kinase isozyme 2, mitochondrial (Pdk2) from Rattus norvegicus (Rat).